The sequence spans 171 residues: Inosine/xanthosine triphosphatase (171 aa).

8–13 contributes to the substrate binding site; that stretch reads TTNPAK. Mg(2+) is bound by residues Glu38 and Gln68.

This sequence belongs to the YjjX NTPase family. In terms of assembly, homodimer. It depends on Mg(2+) as a cofactor. Requires Mn(2+) as cofactor.

The catalysed reaction is XTP + H2O = XDP + phosphate + H(+). The enzyme catalyses ITP + H2O = IDP + phosphate + H(+). Its function is as follows. Phosphatase that hydrolyzes non-canonical purine nucleotides such as XTP and ITP to their respective diphosphate derivatives. Probably excludes non-canonical purines from DNA/RNA precursor pool, thus preventing their incorporation into DNA/RNA and avoiding chromosomal lesions. This Citrobacter koseri (strain ATCC BAA-895 / CDC 4225-83 / SGSC4696) protein is Inosine/xanthosine triphosphatase.